A 339-amino-acid polypeptide reads, in one-letter code: Quinolinate synthase (339 aa).

2 residues coordinate iminosuccinate: His63 and Ser81. Residue Cys126 participates in [4Fe-4S] cluster binding. Residues 152–154 (YVN) and Ser169 contribute to the iminosuccinate site. Cys211 serves as a coordination point for [4Fe-4S] cluster. Residues 237–239 (HPE) and Thr254 contribute to the iminosuccinate site. [4Fe-4S] cluster is bound at residue Cys297.

This sequence belongs to the quinolinate synthase family. Type 2 subfamily. [4Fe-4S] cluster serves as cofactor.

The protein localises to the cytoplasm. It carries out the reaction iminosuccinate + dihydroxyacetone phosphate = quinolinate + phosphate + 2 H2O + H(+). Its pathway is cofactor biosynthesis; NAD(+) biosynthesis; quinolinate from iminoaspartate: step 1/1. Functionally, catalyzes the condensation of iminoaspartate with dihydroxyacetone phosphate to form quinolinate. This is Quinolinate synthase from Xylella fastidiosa (strain 9a5c).